Consider the following 506-residue polypeptide: Steroid (22S)-hydroxylase (506 aa).

The chain crosses the membrane as a helical span at residues 12 to 32; sequence LLFFLPFILLALLTFYTTTVA. Residue C449 coordinates heme.

Belongs to the cytochrome P450 family. It depends on heme as a cofactor.

It is found in the membrane. It carries out the reaction a C28-steroid + reduced [NADPH--hemoprotein reductase] + O2 = a (22S)-22-hydroxy C28-steroid + oxidized [NADPH--hemoprotein reductase] + H2O + H(+). The catalysed reaction is campesterol + reduced [NADPH--hemoprotein reductase] + O2 = (22S)-22-hydroxycampesterol + oxidized [NADPH--hemoprotein reductase] + H2O + H(+). It catalyses the reaction campestanol + reduced [NADPH--hemoprotein reductase] + O2 = 6-deoxycathasterone + oxidized [NADPH--hemoprotein reductase] + H2O + H(+). Its pathway is plant hormone biosynthesis; brassinosteroid biosynthesis. In terms of biological role, catalyzes the C22-alpha-hydroxylation step in brassinosteroid biosynthesis, which is the rate-limiting step in this biosynthetic pathway. Catalyzes the conversion of campesterol (CR) to (22S)-22-hydroxycampesterol (22-OHCR, 22-hydroxyCR) and of campestanol (CN) to 6-deoxocathasterone (6-deoxoCT). The chain is Steroid (22S)-hydroxylase from Oryza sativa subsp. indica (Rice).